The primary structure comprises 509 residues: Maturase K (509 aa).

Belongs to the intron maturase 2 family. MatK subfamily.

Its subcellular location is the plastid. The protein localises to the chloroplast. Functionally, usually encoded in the trnK tRNA gene intron. Probably assists in splicing its own and other chloroplast group II introns. The polypeptide is Maturase K (Pereskia aculeata (Barbados gooseberry)).